The chain runs to 234 residues: MMNELFGEFLGTLILILLGNGVVAGVVLPKTKSNSSGWIVITMGWGIAVAVAVFVSGKLSPAHLNPAVTIGVALKGGLPWASVLPYILAQFAGAMLGQILVWLQFKPHYEAEENAGNILATFSTGPAIKDTVSNLISEILGTFVLVLTIFALGLYDFQAGIGTFAVGTLIVGIGLSLGGTTGYALNPARDLGPRIMHSILPIPNKGDGDWSYAWIPVVGPVIGAALAVLVFSLF.

A run of 6 helical transmembrane segments spans residues 9–29 (FLGT…VVLP), 37–57 (GWIV…FVSG), 61–81 (PAHL…LPWA), 83–103 (VLPY…LVWL), 135–155 (LISE…LGLY), and 159–179 (AGIG…SLGG). The NPA 1 motif lies at 65-67 (NPA). The short motif at 186-188 (NPA) is the NPA 2 element. Residues 214-234 (WIPVVGPVIGAALAVLVFSLF) form a helical membrane-spanning segment.

This sequence belongs to the MIP/aquaporin (TC 1.A.8) family.

Its subcellular location is the cell membrane. It carries out the reaction glycerol(in) = glycerol(out). In terms of biological role, mediates glycerol diffusion across the cytoplasmic membrane via a pore-type mechanism. This is Glycerol uptake facilitator protein (glpF) from Streptococcus pneumoniae (strain ATCC BAA-255 / R6).